The primary structure comprises 312 residues: Ribosomal protein L11 methyltransferase (312 aa).

Residues T163, G184, D206, and N248 each contribute to the S-adenosyl-L-methionine site.

It belongs to the methyltransferase superfamily. PrmA family.

Its subcellular location is the cytoplasm. The catalysed reaction is L-lysyl-[protein] + 3 S-adenosyl-L-methionine = N(6),N(6),N(6)-trimethyl-L-lysyl-[protein] + 3 S-adenosyl-L-homocysteine + 3 H(+). Its function is as follows. Methylates ribosomal protein L11. This chain is Ribosomal protein L11 methyltransferase, found in Clostridium botulinum (strain 657 / Type Ba4).